Reading from the N-terminus, the 273-residue chain is Trypsin-6 (273 aa).

The N-terminal stretch at 1–22 is a signal peptide; it reads MLSKFTAILLAVHIALFACALT. The propeptide at 23–46 is activation peptide; that stretch reads QAEKRHKLTRPAFHPNAPYLAGKR. Residues 47-272 form the Peptidase S1 domain; the sequence is IVGGFVIDIS…VRDWIRETSG (226 aa). Cysteines 72 and 88 form a disulfide. Residues His87 and Asp132 each act as charge relay system in the active site. 2 cysteine pairs are disulfide-bonded: Cys197-Cys213 and Cys224-Cys248. Catalysis depends on Ser228, which acts as the Charge relay system.

This sequence belongs to the peptidase S1 family. As to expression, expressed in the midgut. Expression levels drop a few hours after blood feeding and pick up again 28 hours later.

It localises to the secreted. The catalysed reaction is Preferential cleavage: Arg-|-Xaa, Lys-|-Xaa.. Constitutive trypsin that is expressed 2 days after emergence, coinciding with host seeking behavior of the female. This Anopheles gambiae (African malaria mosquito) protein is Trypsin-6 (TRYP6).